The primary structure comprises 513 residues: Acetylcholine receptor subunit delta (513 aa).

Positions 1–18 (MAVLLALFGALVLSGGLC) are cleaved as a signal peptide. Topologically, residues 19 to 244 (VNQEERLIHH…ITFYLIIKRK (226 aa)) are extracellular. 2 N-linked (GlcNAc...) asparagine glycosylation sites follow: Asn-88 and Asn-161. The cysteines at positions 148 and 162 are disulfide-linked. Transmembrane regions (helical) follow at residues 245–269 (PLFYVINIVTPCVLIAFMAILVFYL), 277–295 (MTLVISVLLAQSVFLLLVS), and 311–332 (YLLFIMLLVTAVVVICVVVLNF). Over 333–467 (HFRTPSTHVM…WNRVARTLDR (135 aa)) the chain is Cytoplasmic. Tyr-388 is modified (phosphotyrosine; by Tyr-kinases). Residues 468-490 (LCLFLITPMLVVGTLWIFLMGIY) form a helical membrane-spanning segment.

Belongs to the ligand-gated ion channel (TC 1.A.9) family. Acetylcholine receptor (TC 1.A.9.1) subfamily. In terms of assembly, pentamer of two alpha chains, and one each of the beta, delta, and gamma chains.

The protein resides in the postsynaptic cell membrane. It is found in the cell membrane. The enzyme catalyses K(+)(in) = K(+)(out). It carries out the reaction Na(+)(in) = Na(+)(out). Its function is as follows. After binding acetylcholine, the AChR responds by an extensive change in conformation that affects all subunits and leads to opening of an ion-conducting channel across the plasma membrane. This Gallus gallus (Chicken) protein is Acetylcholine receptor subunit delta (CHRND).